A 361-amino-acid polypeptide reads, in one-letter code: Peptide chain release factor 1 (361 aa).

An N5-methylglutamine modification is found at Gln236.

It belongs to the prokaryotic/mitochondrial release factor family. Methylated by PrmC. Methylation increases the termination efficiency of RF1.

It localises to the cytoplasm. Functionally, peptide chain release factor 1 directs the termination of translation in response to the peptide chain termination codons UAG and UAA. This chain is Peptide chain release factor 1, found in Lactobacillus delbrueckii subsp. bulgaricus (strain ATCC 11842 / DSM 20081 / BCRC 10696 / JCM 1002 / NBRC 13953 / NCIMB 11778 / NCTC 12712 / WDCM 00102 / Lb 14).